A 148-amino-acid polypeptide reads, in one-letter code: Cytochrome c-552 (148 aa).

Positions 1–17 (MKRTLMAFLLLGGLALA) are cleaved as a signal peptide. A Pyrrolidone carboxylic acid modification is found at Gln18. 4 residues coordinate heme c: Cys28, Cys31, His32, and Met86.

Post-translationally, binds 1 heme c group covalently per subunit.

Its function is as follows. This monoheme basic protein appears to function as an electron donor to cytochrome oxidase in T.thermophilus. The chain is Cytochrome c-552 (cycA) from Thermus thermophilus (strain ATCC 27634 / DSM 579 / HB8).